The chain runs to 151 residues: Large ribosomal subunit protein bL9 (151 aa).

This sequence belongs to the bacterial ribosomal protein bL9 family.

Functionally, binds to the 23S rRNA. The protein is Large ribosomal subunit protein bL9 of Prochlorococcus marinus (strain MIT 9312).